A 61-amino-acid chain; its full sequence is Small ribosomal subunit protein uS14 (61 aa).

The Zn(2+) site is built by C24, C27, C40, and C43.

It belongs to the universal ribosomal protein uS14 family. Zinc-binding uS14 subfamily. In terms of assembly, part of the 30S ribosomal subunit. Contacts proteins S3 and S10. The cofactor is Zn(2+).

Binds 16S rRNA, required for the assembly of 30S particles and may also be responsible for determining the conformation of the 16S rRNA at the A site. In Streptococcus mutans serotype c (strain ATCC 700610 / UA159), this protein is Small ribosomal subunit protein uS14.